The primary structure comprises 616 residues: Dihydroxy-acid dehydratase (616 aa).

Residue Asp-81 coordinates Mg(2+). Position 122 (Cys-122) interacts with [2Fe-2S] cluster. Residues Asp-123 and Lys-124 each coordinate Mg(2+). Lys-124 carries the post-translational modification N6-carboxylysine. Residue Cys-195 coordinates [2Fe-2S] cluster. A Mg(2+)-binding site is contributed by Glu-491. The active-site Proton acceptor is the Ser-517.

The protein belongs to the IlvD/Edd family. In terms of assembly, homodimer. It depends on [2Fe-2S] cluster as a cofactor. Mg(2+) serves as cofactor.

It carries out the reaction (2R)-2,3-dihydroxy-3-methylbutanoate = 3-methyl-2-oxobutanoate + H2O. It catalyses the reaction (2R,3R)-2,3-dihydroxy-3-methylpentanoate = (S)-3-methyl-2-oxopentanoate + H2O. The protein operates within amino-acid biosynthesis; L-isoleucine biosynthesis; L-isoleucine from 2-oxobutanoate: step 3/4. It functions in the pathway amino-acid biosynthesis; L-valine biosynthesis; L-valine from pyruvate: step 3/4. Its function is as follows. Functions in the biosynthesis of branched-chain amino acids. Catalyzes the dehydration of (2R,3R)-2,3-dihydroxy-3-methylpentanoate (2,3-dihydroxy-3-methylvalerate) into 2-oxo-3-methylpentanoate (2-oxo-3-methylvalerate) and of (2R)-2,3-dihydroxy-3-methylbutanoate (2,3-dihydroxyisovalerate) into 2-oxo-3-methylbutanoate (2-oxoisovalerate), the penultimate precursor to L-isoleucine and L-valine, respectively. This is Dihydroxy-acid dehydratase from Azoarcus sp. (strain BH72).